A 298-amino-acid chain; its full sequence is ATP synthase gamma chain (298 aa).

This sequence belongs to the ATPase gamma chain family. As to quaternary structure, F-type ATPases have 2 components, CF(1) - the catalytic core - and CF(0) - the membrane proton channel. CF(1) has five subunits: alpha(3), beta(3), gamma(1), delta(1), epsilon(1). CF(0) has three main subunits: a, b and c.

Its subcellular location is the cell inner membrane. In terms of biological role, produces ATP from ADP in the presence of a proton gradient across the membrane. The gamma chain is believed to be important in regulating ATPase activity and the flow of protons through the CF(0) complex. This is ATP synthase gamma chain from Francisella philomiragia subsp. philomiragia (strain ATCC 25017 / CCUG 19701 / FSC 153 / O#319-036).